A 157-amino-acid polypeptide reads, in one-letter code: Probable calcium-binding protein CML23 (157 aa).

EF-hand domains lie at 11-46 (GSME…LSPN), 47-82 (ASQE…SDQS), 86-121 (SAIR…LGEK), and 122-157 (CSIQ…NGSA). Ca(2+) contacts are provided by aspartate 24, asparagine 26, aspartate 28, lysine 30, glutamate 35, aspartate 60, aspartate 62, asparagine 64, glutamate 71, aspartate 99, aspartate 101, asparagine 103, arginine 105, glutamate 110, aspartate 135, aspartate 137, aspartate 139, cysteine 141, and glutamate 146.

In terms of biological role, potential calcium sensor. This Arabidopsis thaliana (Mouse-ear cress) protein is Probable calcium-binding protein CML23 (CML23).